The primary structure comprises 36 residues: MTAAYLPSILVPLVGLIFPALSMALLFIYIEKETIA.

Residues 9–29 (ILVPLVGLIFPALSMALLFIY) form a helical membrane-spanning segment.

This sequence belongs to the PsaI family.

It localises to the plastid. The protein resides in the chloroplast thylakoid membrane. May help in the organization of the PsaL subunit. The polypeptide is Photosystem I reaction center subunit VIII (Pyropia yezoensis (Susabi-nori)).